The chain runs to 445 residues: MREIVHIQAGQCGNQIGAKFWEVISDEHGIDPTGSYHGDSDLQLERINVYYNEAAGNKYVPRAILVDLEPGTMDSVRSGPFGQIFRPDNFVFGQSGAGNNWAKGHYTEGAELVDSVLDVVRKESESCDCLQGFQLTHSLGGGTGSGMGTLLISKIREEYPDRIMNTFSVMPSPKVSDTVVEPYNATVSVHQLVENTDETYCIDNEALYDICFRTLKLTTPTYGDLNHLVSATMSGVTTCLRFPGQLNADLRKLAVNMVPFPRLHFFMPGFAPLTSRGSQQYRALTVPELTQQMFDSKNMMAACDPRHGRYLTVAAIFRGRMSMKEVDEQMLNVQNKNSSYFVEWIPNNVKTAVCDIPPRGLKMSATFIGNSTAIQELFKRISEQFTAMFRRKAFLHWYTGEGMDEMEFTEAESNMNDLVSEYQQYQDATADEQGEFEEEGEEDEA.

The short motif at 1–4 (MREI) is the MREI motif element. GTP is bound by residues Gln11, Glu69, Ser138, Gly142, Thr143, Gly144, Asn204, and Asn226. Glu69 lines the Mg(2+) pocket. Positions 424–445 (QYQDATADEQGEFEEEGEEDEA) are disordered. The segment covering 429–445 (TADEQGEFEEEGEEDEA) has biased composition (acidic residues). The residue at position 438 (Glu438) is a 5-glutamyl polyglutamate.

It belongs to the tubulin family. As to quaternary structure, dimer of alpha and beta chains. A typical microtubule is a hollow water-filled tube with an outer diameter of 25 nm and an inner diameter of 15 nM. Alpha-beta heterodimers associate head-to-tail to form protofilaments running lengthwise along the microtubule wall with the beta-tubulin subunit facing the microtubule plus end conferring a structural polarity. Microtubules usually have 13 protofilaments but different protofilament numbers can be found in some organisms and specialized cells. It depends on Mg(2+) as a cofactor. Some glutamate residues at the C-terminus are polyglycylated, resulting in polyglycine chains on the gamma-carboxyl group. Glycylation is mainly limited to tubulin incorporated into axonemes (cilia and flagella) whereas glutamylation is prevalent in neuronal cells, centrioles, axonemes, and the mitotic spindle. Both modifications can coexist on the same protein on adjacent residues, and lowering polyglycylation levels increases polyglutamylation, and reciprocally. The precise function of polyglycylation is still unclear. Post-translationally, some glutamate residues at the C-terminus are polyglutamylated, resulting in polyglutamate chains on the gamma-carboxyl group. Polyglutamylation plays a key role in microtubule severing by spastin (SPAST). SPAST preferentially recognizes and acts on microtubules decorated with short polyglutamate tails: severing activity by SPAST increases as the number of glutamates per tubulin rises from one to eight, but decreases beyond this glutamylation threshold. In terms of tissue distribution, highly expressed in skeletal muscle.

The protein localises to the cytoplasm. Its subcellular location is the cytoskeleton. Tubulin is the major constituent of microtubules, a cylinder consisting of laterally associated linear protofilaments composed of alpha- and beta-tubulin heterodimers. Microtubules grow by the addition of GTP-tubulin dimers to the microtubule end, where a stabilizing cap forms. Below the cap, tubulin dimers are in GDP-bound state, owing to GTPase activity of alpha-tubulin. In Gallus gallus (Chicken), this protein is Tubulin beta-1 chain.